Reading from the N-terminus, the 215-residue chain is Late embryogenesis abundant protein 14 (215 aa).

Disordered regions lie at residues 1–129 (MASQ…GQTG) and 190–215 (SGDNKNNAAAGKDTSTYKPGTGSDYQ). Composition is skewed to basic and acidic residues over residues 13 to 24 (GETKARAEEKTG), 32 to 41 (EKAREAKDTA), 54 to 81 (GAKEATKEKAYETKDATKEKAYEAKDAA), and 88 to 111 (AMDKGRGAAGATRDKAYDAKDRAA). Residues 192-215 (DNKNNAAAGKDTSTYKPGTGSDYQ) are compositionally biased toward polar residues.

This sequence belongs to the LEA type 4 family. In terms of tissue distribution, expressed in the shoot apex and leaves. Expressed in dry seeds. Expressed in roots and leaves.

Its subcellular location is the nucleus. The chain is Late embryogenesis abundant protein 14 from Oryza sativa subsp. japonica (Rice).